Consider the following 134-residue polypeptide: D-ribose pyranase (134 aa).

Residue His20 is the Proton donor of the active site. Substrate contacts are provided by residues Asp28, His99, and 123-125; that span reads FSN.

This sequence belongs to the RbsD / FucU family. RbsD subfamily. Homodecamer.

Its subcellular location is the cytoplasm. It carries out the reaction beta-D-ribopyranose = beta-D-ribofuranose. It functions in the pathway carbohydrate metabolism; D-ribose degradation; D-ribose 5-phosphate from beta-D-ribopyranose: step 1/2. In terms of biological role, catalyzes the interconversion of beta-pyran and beta-furan forms of D-ribose. The polypeptide is D-ribose pyranase (Staphylococcus epidermidis (strain ATCC 12228 / FDA PCI 1200)).